We begin with the raw amino-acid sequence, 260 residues long: 3-deoxy-manno-octulosonate cytidylyltransferase (260 aa).

This sequence belongs to the KdsB family.

It is found in the cytoplasm. The catalysed reaction is 3-deoxy-alpha-D-manno-oct-2-ulosonate + CTP = CMP-3-deoxy-beta-D-manno-octulosonate + diphosphate. Its pathway is nucleotide-sugar biosynthesis; CMP-3-deoxy-D-manno-octulosonate biosynthesis; CMP-3-deoxy-D-manno-octulosonate from 3-deoxy-D-manno-octulosonate and CTP: step 1/1. The protein operates within bacterial outer membrane biogenesis; lipopolysaccharide biosynthesis. In terms of biological role, activates KDO (a required 8-carbon sugar) for incorporation into bacterial lipopolysaccharide in Gram-negative bacteria. This Polaromonas naphthalenivorans (strain CJ2) protein is 3-deoxy-manno-octulosonate cytidylyltransferase.